The sequence spans 126 residues: Nitrogenase-stabilizing/protective protein NifW (126 aa).

The segment at 104-126 (VPMSEITVERPATTQTDEKGQQR) is disordered.

This sequence belongs to the NifW family. In terms of assembly, homotrimer; associates with NifD.

May protect the nitrogenase Fe-Mo protein from oxidative damage. This is Nitrogenase-stabilizing/protective protein NifW from Parafrankia sp. (strain EAN1pec).